Reading from the N-terminus, the 199-residue chain is Homeobox protein ceh-19 (199 aa).

Positions 1-42 are disordered; it reads MAFNIESLLEKKSNPVEEGNDFEEENDSEKNGEEDEEEEEKN. The segment covering 18 to 40 has biased composition (acidic residues); it reads EGNDFEEENDSEKNGEEDEEEEE. A DNA-binding region (homeobox) is located at residues 94 to 153; the sequence is ERKPRQAYSARQLDRLETEFQTDKYLSVNKRIQLSQTLNLTETQIKTWFQNRRTKWKKQL.

The protein resides in the nucleus. Its function is as follows. Probable transcription factor. Required for MC motor neuron differentiation and function, including role in modulating pharyngeal pumping. Regulates gene expression of FMRFamide-like neuropeptide flp-2 in MC motor neurons. May act downstream of transcription factor pha-4. The sequence is that of Homeobox protein ceh-19 (ceh-19) from Caenorhabditis elegans.